The primary structure comprises 405 residues: Arginine biosynthesis bifunctional protein ArgJ (405 aa).

Residues threonine 152, lysine 178, threonine 189, glutamate 276, asparagine 400, and threonine 405 each coordinate substrate. Catalysis depends on threonine 189, which acts as the Nucleophile.

Belongs to the ArgJ family. In terms of assembly, heterotetramer of two alpha and two beta chains.

It localises to the cytoplasm. The enzyme catalyses N(2)-acetyl-L-ornithine + L-glutamate = N-acetyl-L-glutamate + L-ornithine. It carries out the reaction L-glutamate + acetyl-CoA = N-acetyl-L-glutamate + CoA + H(+). It functions in the pathway amino-acid biosynthesis; L-arginine biosynthesis; L-ornithine and N-acetyl-L-glutamate from L-glutamate and N(2)-acetyl-L-ornithine (cyclic): step 1/1. The protein operates within amino-acid biosynthesis; L-arginine biosynthesis; N(2)-acetyl-L-ornithine from L-glutamate: step 1/4. In terms of biological role, catalyzes two activities which are involved in the cyclic version of arginine biosynthesis: the synthesis of N-acetylglutamate from glutamate and acetyl-CoA as the acetyl donor, and of ornithine by transacetylation between N(2)-acetylornithine and glutamate. The polypeptide is Arginine biosynthesis bifunctional protein ArgJ (Pseudomonas aeruginosa (strain ATCC 15692 / DSM 22644 / CIP 104116 / JCM 14847 / LMG 12228 / 1C / PRS 101 / PAO1)).